Consider the following 137-residue polypeptide: Secreted RxLR effector protein 67 (137 aa).

A signal peptide spans Met-1–Ala-18. A RxLR-dEER motif is present at residues Arg-32 to Arg-61. Positions Thr-40 to Ser-65 are disordered. Residues Trp-114 to Ala-134 traverse the membrane as a helical segment.

It belongs to the RxLR effector family.

The protein localises to the secreted. It localises to the host cytoplasm. Its subcellular location is the host nucleus. The protein resides in the membrane. In terms of biological role, effector that partially suppresses the tobacco programmed cell death induced by cell death-inducing proteins. This Plasmopara viticola (Downy mildew of grapevine) protein is Secreted RxLR effector protein 67.